We begin with the raw amino-acid sequence, 551 residues long: PA-phosphatase related-family protein DDB_G0268928 (551 aa).

Composition is skewed to polar residues over residues 26–47 (TESL…SGKD) and 137–152 (KYNT…SSNK). 2 disordered regions span residues 26–50 (TESL…DYSS) and 123–172 (KGED…NNNN). Low complexity predominate over residues 153 to 171 (TQTTVLNNSTTSSNNINNN). The next 7 membrane-spanning stretches (helical) occupy residues 211 to 231 (SYSD…SIIY), 232 to 252 (SLLV…LVFI), 273 to 293 (LAVG…AVVL), 346 to 366 (ILQL…IYIL), 393 to 413 (MFIC…LIFP), 474 to 494 (ILPA…IATM), and 500 to 520 (YFVD…YGGF).

This sequence belongs to the PA-phosphatase related phosphoesterase family.

It localises to the membrane. The polypeptide is PA-phosphatase related-family protein DDB_G0268928 (Dictyostelium discoideum (Social amoeba)).